Consider the following 511-residue polypeptide: Exodeoxyribonuclease 7 large subunit (511 aa).

It belongs to the XseA family. In terms of assembly, heterooligomer composed of large and small subunits.

The protein localises to the cytoplasm. It catalyses the reaction Exonucleolytic cleavage in either 5'- to 3'- or 3'- to 5'-direction to yield nucleoside 5'-phosphates.. Functionally, bidirectionally degrades single-stranded DNA into large acid-insoluble oligonucleotides, which are then degraded further into small acid-soluble oligonucleotides. The chain is Exodeoxyribonuclease 7 large subunit from Brucella suis (strain ATCC 23445 / NCTC 10510).